The following is an 853-amino-acid chain: DNA mismatch repair protein MutS (853 aa).

Residue 614 to 621 (GPNMGGKS) participates in ATP binding.

The protein belongs to the DNA mismatch repair MutS family.

In terms of biological role, this protein is involved in the repair of mismatches in DNA. It is possible that it carries out the mismatch recognition step. This protein has a weak ATPase activity. The polypeptide is DNA mismatch repair protein MutS (Klebsiella pneumoniae subsp. pneumoniae (strain ATCC 700721 / MGH 78578)).